We begin with the raw amino-acid sequence, 266 residues long: Type III pantothenate kinase (266 aa).

6–13 lines the ATP pocket; it reads DIGNSRIK. Substrate is bound by residues Y94 and 101-104; that span reads GIDR. Catalysis depends on D103, which acts as the Proton acceptor. K(+) is bound at residue D128. An ATP-binding site is contributed by T131. T183 contributes to the substrate binding site.

Belongs to the type III pantothenate kinase family. Homodimer. NH4(+) serves as cofactor. The cofactor is K(+).

It is found in the cytoplasm. It catalyses the reaction (R)-pantothenate + ATP = (R)-4'-phosphopantothenate + ADP + H(+). The protein operates within cofactor biosynthesis; coenzyme A biosynthesis; CoA from (R)-pantothenate: step 1/5. Catalyzes the phosphorylation of pantothenate (Pan), the first step in CoA biosynthesis. The sequence is that of Type III pantothenate kinase from Nitrosococcus oceani (strain ATCC 19707 / BCRC 17464 / JCM 30415 / NCIMB 11848 / C-107).